The primary structure comprises 329 residues: Ketol-acid reductoisomerase (NADP(+)) (329 aa).

The 181-residue stretch at 2–182 (ARMYYEKDVD…GATRAGVLET (181 aa)) folds into the KARI N-terminal Rossmann domain. NADP(+) is bound by residues 25–28 (YGSQ), serine 51, serine 53, and 83–86 (DEKQ). Histidine 108 is a catalytic residue. Residue glycine 134 coordinates NADP(+). Residues 183–328 (TFKEETETDL…RNLRSMMSFL (146 aa)) form the KARI C-terminal knotted domain. Mg(2+)-binding residues include aspartate 191, glutamate 195, glutamate 227, and glutamate 231. A substrate-binding site is contributed by serine 252.

The protein belongs to the ketol-acid reductoisomerase family. Mg(2+) is required as a cofactor.

It catalyses the reaction (2R)-2,3-dihydroxy-3-methylbutanoate + NADP(+) = (2S)-2-acetolactate + NADPH + H(+). The enzyme catalyses (2R,3R)-2,3-dihydroxy-3-methylpentanoate + NADP(+) = (S)-2-ethyl-2-hydroxy-3-oxobutanoate + NADPH + H(+). It functions in the pathway amino-acid biosynthesis; L-isoleucine biosynthesis; L-isoleucine from 2-oxobutanoate: step 2/4. It participates in amino-acid biosynthesis; L-valine biosynthesis; L-valine from pyruvate: step 2/4. Involved in the biosynthesis of branched-chain amino acids (BCAA). Catalyzes an alkyl-migration followed by a ketol-acid reduction of (S)-2-acetolactate (S2AL) to yield (R)-2,3-dihydroxy-isovalerate. In the isomerase reaction, S2AL is rearranged via a Mg-dependent methyl migration to produce 3-hydroxy-3-methyl-2-ketobutyrate (HMKB). In the reductase reaction, this 2-ketoacid undergoes a metal-dependent reduction by NADPH to yield (R)-2,3-dihydroxy-isovalerate. In Clostridioides difficile (strain 630) (Peptoclostridium difficile), this protein is Ketol-acid reductoisomerase (NADP(+)).